We begin with the raw amino-acid sequence, 400 residues long: Protein screw (400 aa).

Residues 1–16 (MLNVFFLTSLFYAASA) form the signal peptide. Positions 17–277 (TTYVTTNNHI…RFKRDLEKRR (261 aa)) are excised as a propeptide. 5 N-linked (GlcNAc...) asparagine glycosylation sites follow: Asn-165, Asn-189, Asn-201, Asn-304, and Asn-342. Cystine bridges form between Cys-300–Cys-365, Cys-329–Cys-397, and Cys-333–Cys-399.

This sequence belongs to the TGF-beta family. Heterodimers of scw/dpp are the active subunit, dpp/dpp homodimers elicit a basal response and scw/scw homodimers alone are ineffective in specifying a dorsal pattern. Ubiquitously expressed during early stages of embryogenesis, but the effect on development appears graded and is restricted to the dorsal side of the embryo.

Its subcellular location is the secreted. Part of the signal that specifies dorsal cell fates in the embryo. Acts together with dpp. The protein is Protein screw (scw) of Drosophila melanogaster (Fruit fly).